The primary structure comprises 175 residues: Interleukin-10 (175 aa).

Positions 1–18 (MPSSALLYCLIFLAGVAA) are cleaved as a signal peptide. 2 cysteine pairs are disulfide-bonded: Cys26-Cys122 and Cys76-Cys128. Asn130 carries an N-linked (GlcNAc...) asparagine glycan.

This sequence belongs to the IL-10 family. Homodimer. Interacts with IL10RA and IL10RB.

The protein localises to the secreted. Its function is as follows. Major immune regulatory cytokine that acts on many cells of the immune system where it has profound anti-inflammatory functions, limiting excessive tissue disruption caused by inflammation. Mechanistically, IL10 binds to its heterotetrameric receptor comprising IL10RA and IL10RB leading to JAK1 and STAT2-mediated phosphorylation of STAT3. In turn, STAT3 translocates to the nucleus where it drives expression of anti-inflammatory mediators. Targets antigen-presenting cells (APCs) such as macrophages and monocytes and inhibits their release of pro-inflammatory cytokines including granulocyte-macrophage colony-stimulating factor /GM-CSF, granulocyte colony-stimulating factor/G-CSF, IL-1 alpha, IL-1 beta, IL-6, IL-8 and TNF-alpha. Also interferes with antigen presentation by reducing the expression of MHC-class II and co-stimulatory molecules, thereby inhibiting their ability to induce T cell activation. In addition, controls the inflammatory response of macrophages by reprogramming essential metabolic pathways including mTOR signaling. The polypeptide is Interleukin-10 (IL10) (Sus scrofa (Pig)).